A 303-amino-acid polypeptide reads, in one-letter code: Diaminopimelate epimerase (303 aa).

Residues Asn-15 and Asn-72 each coordinate substrate. The Proton donor role is filled by Cys-81. Substrate contacts are provided by residues 82–83 (GN), Asn-169, Asn-202, and 220–221 (ER). The Proton acceptor role is filled by Cys-229. Residue 230 to 231 (GT) participates in substrate binding.

The protein belongs to the diaminopimelate epimerase family. In terms of assembly, homodimer.

It is found in the cytoplasm. It catalyses the reaction (2S,6S)-2,6-diaminopimelate = meso-2,6-diaminopimelate. It functions in the pathway amino-acid biosynthesis; L-lysine biosynthesis via DAP pathway; DL-2,6-diaminopimelate from LL-2,6-diaminopimelate: step 1/1. Its function is as follows. Catalyzes the stereoinversion of LL-2,6-diaminopimelate (L,L-DAP) to meso-diaminopimelate (meso-DAP), a precursor of L-lysine and an essential component of the bacterial peptidoglycan. This Prochlorococcus marinus (strain MIT 9313) protein is Diaminopimelate epimerase.